The following is a 226-amino-acid chain: CRISPR-associated endonuclease Cas3-HD (226 aa).

Residues 9-204 (GRDCLQTYED…HVLTVCDNWG (196 aa)) form the HD Cas3-type domain. Residues D56, H74, H101, and H102 each coordinate Mg(2+).

The protein belongs to the CRISPR-associated nuclease Cas3-HD family. In terms of assembly, monomer. Can form a Cascade complex with Csa5, Cas7, Cas5a, Cas3 and Cas8a2. The cofactor is Mg(2+).

In terms of biological role, CRISPR (clustered regularly interspaced short palindromic repeat), is an adaptive immune system that provides protection against mobile genetic elements (viruses, transposable elements and conjugative plasmids). CRISPR clusters contain sequences complementary to antecedent mobile elements and target invading nucleic acids. CRISPR clusters are transcribed and processed into CRISPR RNA (crRNA). Cas3 plus Cascade participate in CRISPR interference, the third stage of CRISPR immunity. Acts as a ssDNA and ssRNA nuclease, probably with both exo- and endonuclease activities. Activity is higher for DNA than RNA. The protein is CRISPR-associated endonuclease Cas3-HD (cas3') of Thermoproteus tenax (strain ATCC 35583 / DSM 2078 / JCM 9277 / NBRC 100435 / Kra 1).